The primary structure comprises 298 residues: NFU1 iron-sulfur cluster scaffold homolog, mitochondrial (298 aa).

Residues 194–262 form a nifU region; the sequence is IKELLDTRIR…IPEVESVEQV (69 aa). [4Fe-4S] cluster is bound by residues Cys231 and Cys234.

Belongs to the NifU family.

The protein resides in the mitochondrion. In terms of biological role, molecular scaffold for [Fe-S] cluster assembly of mitochondrial iron-sulfur proteins. The sequence is that of NFU1 iron-sulfur cluster scaffold homolog, mitochondrial from Drosophila grimshawi (Hawaiian fruit fly).